We begin with the raw amino-acid sequence, 450 residues long: Probable malate:quinone oxidoreductase (450 aa).

It belongs to the MQO family. The cofactor is FAD.

The enzyme catalyses (S)-malate + a quinone = a quinol + oxaloacetate. Its pathway is carbohydrate metabolism; tricarboxylic acid cycle; oxaloacetate from (S)-malate (quinone route): step 1/1. In Helicobacter pylori (strain P12), this protein is Probable malate:quinone oxidoreductase.